The primary structure comprises 1309 residues: Tetratricopeptide repeat protein 41 (1309 aa).

TPR repeat units follow at residues 399–432 (PQLE…KPCI), 651–684 (WIQE…SVRE), 817–851 (LTFL…SVQS), 859–892 (LKAQ…LLRF), 989–1024 (MSYF…KEKA), and 1042–1079 (SDTL…RAAH).

It is found in the cytoplasm. The polypeptide is Tetratricopeptide repeat protein 41 (Rattus norvegicus (Rat)).